The sequence spans 61 residues: Large ribosomal subunit protein bL32 (61 aa).

Residues 1 to 16 (MAVPKRKTSPSKRGMR) show a composition bias toward basic residues. Residues 1 to 61 (MAVPKRKTSP…RSVLTPKNSG (61 aa)) form a disordered region. The segment covering 28 to 44 (VEDKDSGELRRPHHIDL) has biased composition (basic and acidic residues).

This sequence belongs to the bacterial ribosomal protein bL32 family.

The polypeptide is Large ribosomal subunit protein bL32 (Bartonella bacilliformis (strain ATCC 35685 / KC583 / Herrer 020/F12,63)).